A 513-amino-acid polypeptide reads, in one-letter code: Maturase K (513 aa).

Belongs to the intron maturase 2 family. MatK subfamily.

Its subcellular location is the plastid. It is found in the chloroplast. Functionally, usually encoded in the trnK tRNA gene intron. Probably assists in splicing its own and other chloroplast group II introns. In Cynodon dactylon (Bermuda grass), this protein is Maturase K.